We begin with the raw amino-acid sequence, 506 residues long: MSAIVGLCLLSEKVVLSRSLTDEVSKLYKLNRGNVKEPRKYATERMSTQSKPVALQVPVSTIILDYKNEDFIKQNPTYSAMDIIGSPSNTAPQTAFQSIMPSLSALFNTPFIQGAFRHRIISSMGPEISYLVMVIGPPSGFMDTPNVSSAQSSVHTVSNADVDLNDIIAINSTMAKSTKLVSASTLQAMLVNDVYDRCMDLDGILLSQALPFFRNYVNVQSKGSLPPAVAACLNTPIKELFSMGSGKREPLALEFRKDNEGQCIGIVLPKGHEGDTLSSRYPAVFINESEPFSDKERSELSELKRTDSDAYEKLYSETISKHVSDGSYGNRVIISHKMSRLSNGGVKIIGRFKISDFNTVKKNLSSRSGEIDSAKEQWEALSGNGLVTDSNISMLHDKILDTITSNKPGVVLRDGNKKSENIVVCFKNGFPNKKHSLLQLTKNGISVVSLDELTDAGILVESTGPDRVRRSPKVLANKLSSFKGRKVTLDVDNMSTEALIQKLSTL.

RNA-binding stretches follow at residues 128–249 (ISYL…GKRE) and 325–355 (DGSYGNRVIISHKMSRLSNGGVKIIGRFKIS).

It belongs to the phytoreovirus protein P7 family.

It localises to the virion. The protein localises to the host cytoplasm. Functionally, probable component of the transcriptional machinery present in the inner capsid. Displays dsRNA binding activity and may play an important role in the sorting of viral RNA and virion assembly. Together with the RNA-directed RNA polymerase P1 and capping enzyme P5, forms an transcriptional complex positioned near the channels situated at each of the five-fold vertices of the core. The sequence is that of Protein P7 from Alopecurus aequalis (Barnyard grass).